Here is a 485-residue protein sequence, read N- to C-terminus: Putative aldehyde dehydrogenase AldY (485 aa).

NAD(+) is bound at residue 231–236 (GSTAVG). Catalysis depends on residues Glu-253 and Cys-287.

Belongs to the aldehyde dehydrogenase family.

The enzyme catalyses an aldehyde + NAD(+) + H2O = a carboxylate + NADH + 2 H(+). Functionally, may contribute to protect cells against stress due to ethanol and related compounds. This Bacillus subtilis (strain 168) protein is Putative aldehyde dehydrogenase AldY (aldY).